Here is a 101-residue protein sequence, read N- to C-terminus: Chaperone modulatory protein CbpM (101 aa).

It belongs to the CbpM family.

Functionally, interacts with CbpA and inhibits both the DnaJ-like co-chaperone activity and the DNA binding activity of CbpA. Together with CbpA, modulates the activity of the DnaK chaperone system. Does not inhibit the co-chaperone activity of DnaJ. This chain is Chaperone modulatory protein CbpM, found in Pseudomonas putida (strain GB-1).